Reading from the N-terminus, the 248-residue chain is Pulmonary surfactant-associated protein A1 (248 aa).

A signal peptide spans 1–20 (MWLCPLALNLILMAASGAVC). Residues 28–100 (GSPGIPGTPG…PGERGPPGLP (73 aa)) form the Collagen-like domain. Residues proline 30, proline 33, proline 36, proline 42, proline 54, proline 57, proline 63, proline 67, and proline 70 each carry the 4-hydroxyproline modification. Positions 31 to 101 (GIPGTPGSHG…GERGPPGLPA (71 aa)) are disordered. Residues 42-51 (PGRDGRDGLK) show a composition bias toward basic and acidic residues. Pro residues predominate over residues 54–70 (PGPPGPMGPPGEMPCPP). A C-type lectin domain is found at 132–248 (MTVGEKVFSS…LYSRLTICEF (117 aa)). Cystine bridges form between cysteine 155–cysteine 246 and cysteine 224–cysteine 238. A glycan (N-linked (GlcNAc...) asparagine) is linked at asparagine 207.

The protein belongs to the SFTPA family. As to quaternary structure, oligomeric complex of 6 set of homotrimers. Interacts with CD93. In terms of assembly, (Microbial infection) Binds M.bovis cell surface protein Apa via its glycosylated sites; probably also recognizes other bacterial moieties. (Microbial infection) Binds to the S.aureus extracellular adherence protein, Eap, thereby enhancing phagocytosis and killing of S.aureus by alveolar macrophages. As to quaternary structure, (Microbial infection) Interacts with M.pneumoniae CARDS toxin; CARDS probably uses this protein as a receptor. N-acetylated.

The protein resides in the secreted. It is found in the extracellular space. The protein localises to the extracellular matrix. It localises to the surface film. In presence of calcium ions, it binds to surfactant phospholipids and contributes to lower the surface tension at the air-liquid interface in the alveoli of the mammalian lung and is essential for normal respiration. Enhances the expression of MYO18A/SP-R210 on alveolar macrophages. In terms of biological role, (Microbial infection) Recognition of M.tuberculosis by dendritic cells may occur partially via this molecule. Can recognize, bind, and opsonize pathogens to enhance their elimination by alveolar macrophages. Functionally, (Microbial infection) Binds M.pneumoniae CARDS toxin, serves as one receptor for this pathogen. When SFTPA1 is down-regulated by siRNA, less toxin binds to human cells and less vacuolization (a symptom of M.pneumoniae infection) is seen. The chain is Pulmonary surfactant-associated protein A1 (SFTPA1) from Homo sapiens (Human).